We begin with the raw amino-acid sequence, 113 residues long: uncharacterized protein (113 aa).

This is an uncharacterized protein from Bacillus subtilis (strain 168).